A 505-amino-acid chain; its full sequence is Xylose import ATP-binding protein XylG (505 aa).

2 consecutive ABC transporter domains span residues 6–243 (LEMR…VGRE) and 262–505 (VKNY…TGGK). An ATP-binding site is contributed by 38 to 45 (GENGAGKS).

It belongs to the ABC transporter superfamily. Xylose importer (TC 3.A.1.2.4) family. As to quaternary structure, the complex is composed of two ATP-binding proteins (XylG), two transmembrane proteins (XylH) and a solute-binding protein (XylF).

It is found in the cell membrane. It carries out the reaction D-xylose(out) + ATP + H2O = D-xylose(in) + ADP + phosphate + H(+). Its function is as follows. Part of the ABC transporter complex XylFGH involved in xylose import. Responsible for energy coupling to the transport system. In Thermoanaerobacter pseudethanolicus (strain ATCC 33223 / 39E) (Clostridium thermohydrosulfuricum), this protein is Xylose import ATP-binding protein XylG.